Reading from the N-terminus, the 800-residue chain is Putative antiporter subunit mnhA2 (800 aa).

20 helical membrane-spanning segments follow: residues Met1 to Ser21, Ile33 to Ile53, Gly78 to Ala98, Leu118 to Phe138, Phe167 to Met187, Ala207 to Phe227, Thr241 to Leu261, Tyr273 to Leu293, Gly300 to Gly320, Ile331 to Ile351, Leu387 to Ser407, Phe424 to Phe444, Pro472 to Val492, Gly527 to Ile547, Ile595 to Leu615, Gly627 to Ile647, Leu651 to Met671, Leu676 to Ser696, Ile712 to Ala732, and Leu768 to Leu788.

Belongs to the CPA3 antiporters (TC 2.A.63) subunit A family. As to quaternary structure, may form a heterooligomeric complex that consists of seven subunits: mnhA2, mnhB2, mnhC2, mnhD2, mnhE2, mnhF2 and mnhG2.

Its subcellular location is the cell membrane. This chain is Putative antiporter subunit mnhA2 (mnhA2), found in Staphylococcus aureus (strain MRSA252).